Here is a 193-residue protein sequence, read N- to C-terminus: Sarcoplasmic calcium-binding protein, alpha chain (193 aa).

2 igE-binding epitope regions span residues 10-36 and 49-72; these read KYVVRYMYDIDNNGFLDKNDFECLAVR and DAYANNQKIMRNLWNEIAELADFN. 3 EF-hand domains span residues 16–40, 57–92, and 101–136; these read MYDIDNNGFLDKNDFECLAVRNTLI, IMRNLWNEIAELADFNKDGEVTVDEFKQAVQKHCQG, and AFKVFIANQFKAIDVNGDGKVGLDEYRLDCITRSAF. Residues Asp-18, Asp-20, Asn-22, Asp-29, Asp-70, Asn-72, Asp-74, Glu-76, Glu-81, Asp-114, Asn-116, Asp-118, Lys-120, and Glu-125 each coordinate Ca(2+). Residues 130–147 are igE-binding epitope; the sequence is CITRSAFAEVKEIDDAYN.

SCPs from crayfish, lobster, and shrimp are polymorphic dimers; three isotypes (alpha-alpha, alpha-beta, and beta-beta) have been identified. As to expression, expressed in tail muscle (at protein level).

Functionally, like parvalbumins, SCPs seem to be more abundant in fast contracting muscles, but no functional relationship can be established from this distribution. This chain is Sarcoplasmic calcium-binding protein, alpha chain, found in Penaeus vannamei (Whiteleg shrimp).